The sequence spans 343 residues: Coiled-coil domain-containing protein 97 (343 aa).

M1 carries the post-translational modification N-acetylmethionine. The segment at 1 to 37 (MEAVATATAAKEPDKGCIEPGPGHWGELSRTPVPSKP) is disordered. Residue T47 is modified to Phosphothreonine. Disordered regions lie at residues 200 to 220 (ARTP…ACPL), 234 to 277 (QQRL…DSEE), and 292 to 343 (RFLD…LDGD). A coiled-coil region spans residues 224-262 (LLQSYEERELQQRLLQQQEEEEACLEEEEEEEDSDEEDQ). Positions 241–261 (QEEEEACLEEEEEEEDSDEED) are enriched in acidic residues. Positions 262-277 (QRSGKDSEAWVPDSEE) are enriched in basic and acidic residues. A phosphoserine mark is found at S275 and S337. Residues 324 to 343 (ERYFDEEEPEDAPSPELDGD) show a composition bias toward acidic residues.

In terms of assembly, associates with splicing factor SF3B complex, involved in branch-site recognition.

The protein resides in the nucleus. In terms of biological role, may play a role pre-mRNA splicing through the association with the splicing factor SF3B complex which is involved in branch-site recognition. The protein is Coiled-coil domain-containing protein 97 (CCDC97) of Homo sapiens (Human).